A 223-amino-acid polypeptide reads, in one-letter code: Cytidylate kinase (223 aa).

10–18 (GPAGAGKST) provides a ligand contact to ATP.

The protein belongs to the cytidylate kinase family. Type 1 subfamily.

The protein resides in the cytoplasm. It catalyses the reaction CMP + ATP = CDP + ADP. It carries out the reaction dCMP + ATP = dCDP + ADP. The protein is Cytidylate kinase of Exiguobacterium sibiricum (strain DSM 17290 / CCUG 55495 / CIP 109462 / JCM 13490 / 255-15).